A 348-amino-acid polypeptide reads, in one-letter code: Erlin-1 (348 aa).

The Cytoplasmic portion of the chain corresponds to Met-1 to Arg-7. A helical transmembrane segment spans residues Leu-8–Ile-28. The Lumenal portion of the chain corresponds to Glu-29–Gly-348. The N-linked (GlcNAc...) asparagine glycan is linked to Asn-108. Residue Lys-269 is modified to N6-acetyllysine. The segment covering Asp-318 to Ser-336 has biased composition (basic and acidic residues). Residues Asp-318–Gly-348 form a disordered region. Positions Ser-339–Gly-348 are enriched in polar residues.

It belongs to the band 7/mec-2 family. As to quaternary structure, forms a heteromeric complex with ERLIN2. In complex with ERLIN2, interacts with RNF170. Interacts with AMFR and SYVN1. In terms of processing, deubiquitinated by USP25; leading to stabilization.

The protein localises to the endoplasmic reticulum membrane. Component of the ERLIN1/ERLIN2 complex which mediates the endoplasmic reticulum-associated degradation (ERAD) of inositol 1,4,5-trisphosphate receptors (IP3Rs). Involved in regulation of cellular cholesterol homeostasis by regulation the SREBP signaling pathway. Binds cholesterol and may promote ER retention of the SCAP-SREBF complex. In Mus musculus (Mouse), this protein is Erlin-1.